An 825-amino-acid polypeptide reads, in one-letter code: Zinc finger protein 28 (825 aa).

The segment at 26–65 (RPGGGPAAGTVVAPGSPDRGRPRSRNSLASQDQQGAVTSG) is disordered. Positions 33–42 (AGTVVAPGSP) are enriched in low complexity. Residues 51 to 65 (NSLASQDQQGAVTSG) are compositionally biased toward polar residues. The KRAB domain occupies 103–174 (VTFGDVAVVF…KRKMRKGQHL (72 aa)). 14 consecutive C2H2-type zinc fingers follow at residues 377 to 399 (FQCNECKKTFTQSSSLTVHQRIH), 405 to 427 (YKCNQCGKAFSDGSSFARHQRCH), 433 to 456 (YECPECGKAFIQNTSLVRHWRYYH), 462 to 484 (FDCIDCGKAFSDHIGLNQHRRIH), 490 to 512 (YTCEVCHKSFRYGSSLTVHQRIH), 518 to 540 (YECEICRKAFSHHASLTQHQRVH), 546 to 568 (FKCKECGKAFRQNIHLASHWRIH), 574 to 596 (FECGECGKSFSISSQLATHQRIH), 602 to 624 (YECKVCRKAFTQKAHLAQHQKTH), 630 to 652 (YECKECGKAFSQTTHLIQHQRVH), 658 to 680 (YKCLECGKAFGDNSSCTQHRRLH), 686 to 708 (YECVECGKTFKTKSSLICHRRCH), 714 to 736 (YECSACGKAFSHRQSLSVHQRIH), and 742 to 764 (YECKECRKTFIQIGHLNQHKRVH). A C2H2-type 15; degenerate zinc finger spans residues 770-792 (YNYKKGRRAFRQTAHFAHHQQIH).

This sequence belongs to the krueppel C2H2-type zinc-finger protein family. In terms of tissue distribution, expressed predominantly in ovary.

Its subcellular location is the nucleus. In terms of biological role, may be involved in transcriptional regulation. May have a role in embryonic development. The polypeptide is Zinc finger protein 28 (Zfp28) (Mus musculus (Mouse)).